Here is an 849-residue protein sequence, read N- to C-terminus: Ribosome biogenesis protein ERB1 (849 aa).

A disordered region spans residues 1–130; it reads MARNSIKKSP…PKDDDLSRIN (130 aa). Composition is skewed to acidic residues over residues 29-44 and 51-123; these read EAEEDSNDEESEDELN and ASDD…EPKD. Positions 286–405 are required for interaction with NOP7; the sequence is RFVPSKHEAK…LRQVPGYQDS (120 aa). The required for interaction with YTM1 stretch occupies residues 405–441; the sequence is SVRERFERSLDLYLAPRVRHNKLNIDPDSLIPDLPSP. WD repeat units lie at residues 457-496 and 505-545; these read GHTGKIRTISIDPQGLWLATGSDDGSVRIWEILTGRQVYK and NNED…FDIE. Over residues 569-581 the composition is skewed to basic and acidic residues; sequence KISSQKEEDNKES. The segment at 569-619 is disordered; that stretch reads KISSQKEEDNKESDNEDEDEEEDNDDDDDDDEPETSSTVEPKKEVAKWYPP. Acidic residues predominate over residues 582–602; the sequence is DNEDEDEEEDNDDDDDDDEPE. WD repeat units lie at residues 633-675, 678-716, 719-758, 762-802, and 818-849; these read QCRK…SQSP, KSKGIIMDAKFHPFKPQLFVASQRQIKIYDLAQQVLLKK, PGVRLLSTIDIHPRGDNLIAGSYDKRVLWHDLDLSATPYK, YHEK…DLMT, and INQIGILDLIWHPKEPWLFSAGADGTARLWTT.

Belongs to the WD repeat BOP1/ERB1 family. Component of the NOP7 complex, composed of ERB1, NOP7 and YTM1. The complex is held together by ERB1, which interacts with NOP7 via its N-terminal domain and with YTM1 via a high-affinity interaction between the seven-bladed beta-propeller domains of the 2 proteins. The NOP7 complex associates with the 66S pre-ribosome.

The protein resides in the nucleus. It is found in the nucleolus. It localises to the nucleoplasm. Component of the NOP7 complex, which is required for maturation of the 25S and 5.8S ribosomal RNAs and formation of the 60S ribosome. The chain is Ribosome biogenesis protein ERB1 from Candida albicans (strain SC5314 / ATCC MYA-2876) (Yeast).